A 1000-amino-acid chain; its full sequence is uncharacterized protein (1000 aa).

Residues 787 to 809 show a composition bias toward basic and acidic residues; that stretch reads RQYEKLKRQRAKSETERHQERHG. The interval 787-812 is disordered; it reads RQYEKLKRQRAKSETERHQERHGKLS.

This is an uncharacterized protein from Picosynechococcus sp. (strain ATCC 27264 / PCC 7002 / PR-6) (Agmenellum quadruplicatum).